Here is a 1299-residue protein sequence, read N- to C-terminus: MNISIIQNNNPLSMMSSVYRQNQSQDTNLPSALTIYNSLTGAKVVASAYQFHNLEALKQFIGMSFNVATENLFLLTPFGIKLKFSMIVHEEISEIYVFDRRYFNVNNIEASGNMDNVNDLLAELNQTDFINMIKPLASPLLSEELSVFVEKLTLVLENTTQIKAVDINLNMLRMLLNSLKRNSGWASALLSDFKKTVAFDECTPEDNDLETILTSLNVLIQYVGLVFKTLEKKFNDSIDALVLLQSNSLVDQWRDQYALLKRIPFEFKSGSSNVPEKLFLSQLVNESHLDKCAEESRRLNKSMNERLVMLRSKIEADVIKPRQELLQEYNGYMSQYIRPETDATQKTQKIQDCKRILAELEVHVSKLIQSSSSLPSFEELITTASQTSTTLSASSIANIKKLTQLYKYQESELVPYIFQLANNLYDIQINKLNARKELQTKLICSTLINITKIQLNIMRLSTVLNTEVAKNIASIKENELQLSVVSDLPLMFGIFVIANLNNLKFGISLNNIVKKANEIFEMLRFMESRNRAKWLKEFLASSGADKVEFLHLDEEARERFINENMLSYKLEQVDAIRSKKSPSPVDHPASPVSGQEKHYLTSINRLLHNINGFPAPRPTATELPKQRETNIMTNLARNISVKSIVSYINTLRKEGIDLNIVNRLEECLKDFGITYGAIERKAIETEDGEEIVVKGKNAGDLGTFDVNDVNYMRLFKKFIKSFESEGIVININVNQQDSVSNDELIKGYERRIRKLENVLHTRNFQQFNEQWSRHRPVHTLPNPVSRRQSDMSQEPAVHENTILFNENVVLGRKTIDLPPSHYGERIERLEKENERYRGEIEELKKGTDLAELDRLKKEIEDLQKADMEKDKRLAALEEENKNLKESNEELTNSNKELVNMCEELKSMKSDLLENMTQKESEFGKEAKVNQQEINELKLRIEELEEDESNLVNVNKTLNERLAIKDGLLCQLYELVQGAYGKLNQMSGEIFSNLTRVCLLLESIGLLLIRETPSFDNHPGTLTIKRVKGLRSRKRQIKQASDSTHNGNLQNDTFEDSEHIDNALMEVVSSEVVPEAEQYLHWVDTNVLNYTISSDLGIEDEIEHKKNESSLIDMSLCEESSIEKKVKKLLANYESFNVEQGFQNFLRFNHVDNELVIERVFRRFSDVETLARKLQKDKTQQKQELKMLTAELDGKIAFRNFKVGDLVLFLKTLTPANEELGGGDEQPWAAFNVGCPNYYLKNTKGEGYIELSDRDWLVGRVSKIEPRQVTEQNFHSKTENPFRLAKSVVWYYVEAREVKE.

3 coiled-coil regions span residues 294–367, 820–962, and 1164–1194; these read EESR…VSKL, SHYG…ERLA, and SDVETLARKLQKDKTQQKQELKMLTAELDGK.

Belongs to the ATG11 family. In terms of assembly, homodimer.

The protein resides in the preautophagosomal structure membrane. It localises to the vacuole membrane. In terms of biological role, involved in cytoplasm to vacuole transport (Cvt), pexophagy, mitophagy and nucleophagy. Recruits mitochondria for their selective degradation via autophagy (mitophagy) during starvation. Works as scaffold proteins that recruit ATG proteins to the pre-autophagosome (PAS), the site of vesicle/autophagosome formation. Required for the Cvt vesicles completion. The sequence is that of Autophagy-related protein 11 (ATG11) from Pichia angusta (Yeast).